Consider the following 338-residue polypeptide: tRNA-specific 2-thiouridylase MnmA (338 aa).

ATP-binding positions include 6–13 (AMSGGVDS) and methionine 32. Catalysis depends on cysteine 92, which acts as the Nucleophile. A disulfide bridge connects residues cysteine 92 and cysteine 186. An ATP-binding site is contributed by glycine 116. An interaction with tRNA region spans residues 134–136 (KDQ). The active-site Cysteine persulfide intermediate is the cysteine 186. The interval 288–289 (RY) is interaction with tRNA.

The protein belongs to the MnmA/TRMU family.

Its subcellular location is the cytoplasm. It catalyses the reaction S-sulfanyl-L-cysteinyl-[protein] + uridine(34) in tRNA + AH2 + ATP = 2-thiouridine(34) in tRNA + L-cysteinyl-[protein] + A + AMP + diphosphate + H(+). Catalyzes the 2-thiolation of uridine at the wobble position (U34) of tRNA, leading to the formation of s(2)U34. The chain is tRNA-specific 2-thiouridylase MnmA from Campylobacter lari (strain RM2100 / D67 / ATCC BAA-1060).